The following is a 418-amino-acid chain: MDQNLSGLDCLSEPDEKRWPDGKRKRKNSQCMGKSGMSGDSSVSLLSAGYIPSYLTKDEPCVVCSDKATGYHYRCITCEGCKGFFRRTIQKNLHPSYSCKYDGCCIIDKITRNQCQLCRFKKCIAVGMAMDLVLDDSKRVAKRKLIEENRERRRKEEMIKTLQQRPEPSSEEWELIRIVTEAHRSTNAQGSHWKQRRKFLPEDIGQNPMASMPDSDKVDLEAFSEFTKIITPAITRVVDFAKKLPMFSELPCEDQIILLKGCCMEIMSLRAAVRYDPDSETLTLSGEMAVKREQLKNGGLGVVSDAIFDLGRSLSAFNLDDTEVALLQAVLLMSSDRTGLICTDKIEKCQETYLLAFEHYINHRKHNIPHFWPKLLMKVTDLRMIGACHASRFLHMKVECPTELFPPLFLEVFEDQEV.

A disordered region spans residues 1-41 (MDQNLSGLDCLSEPDEKRWPDGKRKRKNSQCMGKSGMSGDS). The segment at 1–60 (MDQNLSGLDCLSEPDEKRWPDGKRKRKNSQCMGKSGMSGDSSVSLLSAGYIPSYLTKDEP) is modulating. Zn(2+) contacts are provided by Cys-61, Cys-64, Cys-78, Cys-81, Cys-99, Cys-105, Cys-115, and Cys-118. 2 NR C4-type zinc fingers span residues 61 to 81 (CVVC…CEGC) and 99 to 123 (CKYD…FKKC). The nuclear receptor DNA-binding region spans 61–135 (CVVCSDKATG…VGMAMDLVLD (75 aa)). The NR LBD domain maps to 171–415 (EEWELIRIVT…PPLFLEVFED (245 aa)). 3,3',5-triiodo-L-thyronine-binding residues include Arg-236 and Ser-285.

Belongs to the nuclear hormone receptor family. NR1 subfamily. In terms of tissue distribution, highest level of expression in erythrocytes. Also expressed in liver, tail, eye, muscle and skin.

The protein resides in the nucleus. In terms of biological role, nuclear hormone receptor that can act as a repressor or activator of transcription. High affinity receptor for thyroid hormones, including triiodothyronine and thyroxine. The protein is Thyroid hormone receptor alpha (thra) of Aquarana catesbeiana (American bullfrog).